A 113-amino-acid polypeptide reads, in one-letter code: MQAKAVARTVRIAPRKARLVIDLIRGKKVGEAFAILRHTPKAASPIIEKVLKSAVANAEHNYDMDINNLVVSQAYVNEGPTLKRFRPRARGQASAINKRTSHITIVVSEKKEG.

This sequence belongs to the universal ribosomal protein uL22 family. As to quaternary structure, part of the 50S ribosomal subunit.

This protein binds specifically to 23S rRNA; its binding is stimulated by other ribosomal proteins, e.g. L4, L17, and L20. It is important during the early stages of 50S assembly. It makes multiple contacts with different domains of the 23S rRNA in the assembled 50S subunit and ribosome. Its function is as follows. The globular domain of the protein is located near the polypeptide exit tunnel on the outside of the subunit, while an extended beta-hairpin is found that lines the wall of the exit tunnel in the center of the 70S ribosome. This is Large ribosomal subunit protein uL22 from Geobacillus thermodenitrificans (strain NG80-2).